The primary structure comprises 92 residues: Transcription factor ILI6 (92 aa).

A disordered region spans residues 1-20 (MSSRRSRSRQSGSSRITDEQ). Positions 5–59 (RSRSRQSGSSRITDEQISDLVSKLQDLLPEARLRSNDRVPSSRVLQETCNYIRSL) constitute a bHLH domain.

It belongs to the bHLH protein family. In terms of assembly, interacts with APG.

The protein resides in the nucleus. Atypical and probable non DNA-binding bHLH transcription factor that acts as a positive regulator of grain size. Binds the transcription repressor APG and forms a heterodimer of antagonistic bHLH transcription factors that regulates grain length and weight by controlling cell elongation in lemma and palea. May be involved in the control of lamina inclination through brassinosteroid signaling pathway. The sequence is that of Transcription factor ILI6 (ILI6) from Oryza sativa subsp. indica (Rice).